Consider the following 272-residue polypeptide: 1,4-dihydroxy-6-naphtoate synthase (272 aa).

Substrate is bound by residues 55–57 and 107–108; these read KLS and TA. Catalysis depends on His-145, which acts as the Proton acceptor.

Belongs to the MqnA/MqnD family. MqnD subfamily.

It catalyses the reaction cyclic dehypoxanthinylfutalosinate = 1,4-dihydroxy-6-naphthoate + dihydroxyacetone. Its pathway is quinol/quinone metabolism; menaquinone biosynthesis. Its function is as follows. Catalyzes the conversion of cyclic dehypoxanthine futalosine (cyclic DHFL) into 1,4-dihydroxy-6-naphthoate, a step in the biosynthesis of menaquinone (MK, vitamin K2). The protein is 1,4-dihydroxy-6-naphtoate synthase of Thermus thermophilus (strain ATCC 27634 / DSM 579 / HB8).